The primary structure comprises 1676 residues: Protein TIC 214 (1676 aa).

The next 6 membrane-spanning stretches (helical) occupy residues 24–44 (KIIN…ALAL), 70–90 (LILG…YIAF), 93–113 (PYTL…GNNL), 130–150 (LEIL…TCIF), 170–190 (MVFL…VLMC), and 218–238 (FFLV…IQSL). 2 stretches are compositionally biased toward basic and acidic residues: residues 264 to 276 (LKKS…GKST) and 283 to 298 (SHEK…SKLE). Disordered regions lie at residues 264 to 302 (LKKS…NEDE), 546 to 610 (LVVF…SYSI), 1123 to 1151 (NKQS…NLIL), and 1372 to 1436 (QQQN…SEDD). Polar residues predominate over residues 562-586 (DSGNIQNKSSDKTINPQNNLTNSKT). The segment covering 597-610 (TTEKEPKDDKSYSI) has biased composition (basic and acidic residues). Polar residues predominate over residues 1123 to 1138 (NKQSLQKGNSKGNSNL). A compositionally biased stretch (low complexity) spans 1372–1390 (QQQNQTTTKINTETKNQQK). Residues 1384 to 1436 (ETKNQQKNRVENEENKETENQQNAETKNKQKSKTENEENKETENQQNDESEDD) are a coiled coil. Composition is skewed to basic and acidic residues over residues 1391 to 1402 (NRVENEENKETE) and 1409 to 1426 (TKNK…KETE).

The protein belongs to the TIC214 family. As to quaternary structure, part of the Tic complex.

The protein resides in the plastid. It is found in the chloroplast inner membrane. Involved in protein precursor import into chloroplasts. May be part of an intermediate translocation complex acting as a protein-conducting channel at the inner envelope. In Cuscuta obtusiflora (Peruvian dodder), this protein is Protein TIC 214.